The chain runs to 261 residues: 5'-nucleotidase SurE (261 aa).

A divalent metal cation is bound by residues aspartate 8, aspartate 9, serine 39, and asparagine 94.

It belongs to the SurE nucleotidase family. Requires a divalent metal cation as cofactor.

It is found in the cytoplasm. The enzyme catalyses a ribonucleoside 5'-phosphate + H2O = a ribonucleoside + phosphate. In terms of biological role, nucleotidase that shows phosphatase activity on nucleoside 5'-monophosphates. The sequence is that of 5'-nucleotidase SurE from Archaeoglobus fulgidus (strain ATCC 49558 / DSM 4304 / JCM 9628 / NBRC 100126 / VC-16).